We begin with the raw amino-acid sequence, 344 residues long: Ferrochelatase (344 aa).

Fe cation-binding residues include His-214 and Glu-295.

It belongs to the ferrochelatase family.

Its subcellular location is the cytoplasm. It carries out the reaction heme b + 2 H(+) = protoporphyrin IX + Fe(2+). The protein operates within porphyrin-containing compound metabolism; protoheme biosynthesis; protoheme from protoporphyrin-IX: step 1/1. Functionally, catalyzes the ferrous insertion into protoporphyrin IX. The sequence is that of Ferrochelatase from Allorhizobium ampelinum (strain ATCC BAA-846 / DSM 112012 / S4) (Agrobacterium vitis (strain S4)).